The primary structure comprises 736 residues: 3',5'-cyclic-AMP phosphodiesterase 4B (736 aa).

Disordered regions lie at residues 51–78, 189–209, and 282–301; these read QLPPLSQRQSERARTPEGDGISRPTTLP, LHGTSNKRSPAASQPPVSRVN, and KQNDVEIPSPTQKDREKKKK. At serine 290 the chain carries Phosphoserine. One can recognise a PDEase domain in the interval 330–659; it reads VNTENEDHLA…NWYQSMIPQS (330 aa). Catalysis depends on histidine 406, which acts as the Proton donor. Histidine 406 contacts 3',5'-cyclic AMP. AMP is bound by residues histidine 406 and histidine 410. Histidine 410, histidine 446, aspartate 447, and aspartate 564 together coordinate Zn(2+). Residues aspartate 447, aspartate 564, glutamine 615, and phenylalanine 618 each contribute to the AMP site. Position 447 (aspartate 447) interacts with Mg(2+). Residue aspartate 447 coordinates Mn(2+). Residues glutamine 615 and phenylalanine 618 each contribute to the 3',5'-cyclic AMP site. Serine 659 and serine 661 each carry phosphoserine. The interval 685 to 736 is disordered; that stretch reads DEEDSEGPEKEGEGHSYFSSTKTLCVIDPENRDSLGETDIDIATEDKSPVDT.

Belongs to the cyclic nucleotide phosphodiesterase family. PDE4 subfamily. In terms of assembly, interacts with DISC1. Zn(2+) serves as cofactor. The cofactor is Mg(2+). It depends on Mn(2+) as a cofactor. Expressed in brain, heart, lung and skeletal muscle. Expressed in white blood cells. In terms of tissue distribution, brain-specific isoform.

It is found in the cytoplasm. It localises to the cell membrane. It catalyses the reaction 3',5'-cyclic AMP + H2O = AMP + H(+). It functions in the pathway purine metabolism; 3',5'-cyclic AMP degradation; AMP from 3',5'-cyclic AMP: step 1/1. Its activity is regulated as follows. Inhibited by rolipram. Hydrolyzes the second messenger cAMP, which is a key regulator of many important physiological processes. May be involved in mediating central nervous system effects of therapeutic agents ranging from antidepressants to antiasthmatic and anti-inflammatory agents. The polypeptide is 3',5'-cyclic-AMP phosphodiesterase 4B (Homo sapiens (Human)).